Here is a 276-residue protein sequence, read N- to C-terminus: Glutamate 5-kinase (276 aa).

K14 is an ATP binding site. The substrate site is built by S54, D141, and N157. ATP contacts are provided by residues 177–178 (SD) and 219–225 (TGGMLTK).

It belongs to the glutamate 5-kinase family.

It is found in the cytoplasm. It catalyses the reaction L-glutamate + ATP = L-glutamyl 5-phosphate + ADP. It participates in amino-acid biosynthesis; L-proline biosynthesis; L-glutamate 5-semialdehyde from L-glutamate: step 1/2. Functionally, catalyzes the transfer of a phosphate group to glutamate to form L-glutamate 5-phosphate. The chain is Glutamate 5-kinase from Listeria innocua serovar 6a (strain ATCC BAA-680 / CLIP 11262).